The primary structure comprises 200 residues: RPW8-like protein 4 (200 aa).

In terms of domain architecture, RPW8 spans 1–157 (MPIAELAVIK…MKAIQVDQWT (157 aa)). Residues 7-29 (AVIKTVGGPLIAAALGVGAQVIY) traverse the membrane as a helical segment. Positions 70–127 (REVHESLTRLLEDAKSIIEKYWKLRWSRHVCRKYRYIKKLESIELELVRVAREIQVHQ) form a coiled coil.

This sequence belongs to the plant RPW8 protein family.

It localises to the membrane. In terms of biological role, probable disease resistance (R) protein. The polypeptide is RPW8-like protein 4 (HR4) (Arabidopsis thaliana (Mouse-ear cress)).